We begin with the raw amino-acid sequence, 240 residues long: MDLRLIFGPTCTGKTSTAVALAQQTGLPVLSLDRVQCCPQLSTGSGRPTVEELKGTSRLYLDDRPLVKGIIAAKQAHERLMGEVYNYEAHGGLILEGGSISLLKCMAQSSYWSADFRWHIIRHELADEETFMNVAKARVKQMLRPAAGLSIIQELVDLWKEPRLRPILKEIDGYRYAMLFASQNQITSDMLLQLDADMEDKLIHGIAQEYLIHARRQEQKFPRVNAAAYDGFEGHPFGMY.

Belongs to the isopentenyl transferase family.

It carries out the reaction dimethylallyl diphosphate + AMP = N(6)-(dimethylallyl)adenosine 5'-phosphate + diphosphate. Its function is as follows. Transfers dimethylallyl groups to AMP as part of the biosynthesis of cytokinin phytohormones. The chain is Adenylate dimethylallyltransferase (izt) from Agrobacterium fabrum (strain C58 / ATCC 33970) (Agrobacterium tumefaciens (strain C58)).